Reading from the N-terminus, the 504-residue chain is Catalase (504 aa).

Catalysis depends on residues His-56 and Asn-129. Heme is bound at residue Tyr-339.

It belongs to the catalase family. Homodimer. The cofactor is heme.

It carries out the reaction 2 H2O2 = O2 + 2 H2O. In terms of biological role, decomposes hydrogen peroxide into water and oxygen; serves to protect cells from the toxic effects of hydrogen peroxide. This chain is Catalase (katA), found in Staphylococcus epidermidis.